The sequence spans 239 residues: Lectin (239 aa).

Asn17 and Asn113 each carry an N-linked (GlcNAc...) asparagine glycan.

It belongs to the leguminous lectin family. Homodimer.

Its function is as follows. Galactose and N-acetyllactosamine specific lectin. This chain is Lectin, found in Erythrina crista-galli (Cockspur coral tree).